The primary structure comprises 272 residues: Large ribosomal subunit protein uL2cz/uL2cy (272 aa).

Disordered regions lie at residues 1–33 and 220–272; these read MAIH…SGQR and VMNP…RRSK. Alanine 2 is subject to N-methylalanine. Residues 7 to 30 show a composition bias toward polar residues; that stretch reads KTSTSSTRNGAVQVKSNPRNNLIS.

It belongs to the universal ribosomal protein uL2 family. Component of the chloroplast large ribosomal subunit (LSU). Mature 70S chloroplast ribosomes of higher plants consist of a small (30S) and a large (50S) subunit. The 30S small subunit contains 1 molecule of ribosomal RNA (16S rRNA) and 24 different proteins. The 50S large subunit contains 3 rRNA molecules (23S, 5S and 4.5S rRNA) and 33 different proteins.

The protein resides in the plastid. It localises to the chloroplast. Its function is as follows. Component of the chloroplast ribosome (chloro-ribosome), a dedicated translation machinery responsible for the synthesis of chloroplast genome-encoded proteins, including proteins of the transcription and translation machinery and components of the photosynthetic apparatus. The sequence is that of Large ribosomal subunit protein uL2cz/uL2cy (rpl2-A) from Spinacia oleracea (Spinach).